Here is a 609-residue protein sequence, read N- to C-terminus: Proline--tRNA ligase (609 aa).

The protein belongs to the class-II aminoacyl-tRNA synthetase family. ProS type 1 subfamily. As to quaternary structure, homodimer.

It localises to the cytoplasm. The catalysed reaction is tRNA(Pro) + L-proline + ATP = L-prolyl-tRNA(Pro) + AMP + diphosphate. In terms of biological role, catalyzes the attachment of proline to tRNA(Pro) in a two-step reaction: proline is first activated by ATP to form Pro-AMP and then transferred to the acceptor end of tRNA(Pro). As ProRS can inadvertently accommodate and process non-cognate amino acids such as alanine and cysteine, to avoid such errors it has two additional distinct editing activities against alanine. One activity is designated as 'pretransfer' editing and involves the tRNA(Pro)-independent hydrolysis of activated Ala-AMP. The other activity is designated 'posttransfer' editing and involves deacylation of mischarged Ala-tRNA(Pro). The misacylated Cys-tRNA(Pro) is not edited by ProRS. The sequence is that of Proline--tRNA ligase from Synechococcus sp. (strain JA-2-3B'a(2-13)) (Cyanobacteria bacterium Yellowstone B-Prime).